The following is a 181-amino-acid chain: Protein CRABS CLAW (181 aa).

A C4-type zinc finger spans residues 26-53; that stretch reads CSICNTILAVGIPLKRMLDTVTVKCGHC. The interval 80-122 is disordered; the sequence is GSDYKKGSSSSSSSSTSSDQPPSPSPPFVVKPPEKKQRLPSAY. A compositionally biased stretch (low complexity) spans 87–99; the sequence is SSSSSSSSTSSDQ. Pro residues predominate over residues 100-109; it reads PPSPSPPFVV.

The protein belongs to the YABBY family. Restricted to flowers, mostly in carpels and nectaries. Expressed at low levels in sepal primordia (buds), sepal receptacle and developing petal. Not detected in placental tissues, septum, stigma and ovules.

The protein resides in the nucleus. Transcription factor required for the initiation of nectary development. Also involved in suppressing early radial growth of the gynoecium, in promoting its later elongation and in fusion of its carpels by regulating both cell division and expansion. Establishes the polar differentiation in the carpels by specifying abaxial cell fate in the ovary wall. Regulates both cell division and expansion. The polypeptide is Protein CRABS CLAW (Arabidopsis thaliana (Mouse-ear cress)).